A 1393-amino-acid chain; its full sequence is RNA polymerase II-associated protein 1 (1393 aa).

3 disordered regions span residues 34 to 53 (KKGN…LQDH), 61 to 94 (NLPD…PEER), and 266 to 295 (SHTQ…EEPL). A compositionally biased stretch (pro residues) spans 64 to 74 (DLPPALVPSPP). S72 is modified (phosphoserine). Residue T321 is modified to Phosphothreonine. The tract at residues 496-531 (PSQEDKEDEDEDEECPAGKAKRKSPEEESRPPPDLA) is disordered. Acidic residues predominate over residues 500 to 510 (DKEDEDEDEEC). The segment covering 518–531 (KSPEEESRPPPDLA) has biased composition (basic and acidic residues). Phosphoserine is present on S1121.

Belongs to the RPAP1 family. Part of an RNA polymerase II complex that contains POLR2A, POLR2B, POLR2C, POLR2D, POLR2E, POLR2F, POLR2G, POLR2H, POLR2I, POLR2J, POLR2K, POLR2L, RPAP1, FCP1 plus the general transcription factors TFIIB and TFIIF.

Its subcellular location is the nucleus. Forms an interface between the RNA polymerase II enzyme and chaperone/scaffolding protein, suggesting that it is required to connect RNA polymerase II to regulators of protein complex formation. Required for interaction of the RNA polymerase II complex with acetylated histone H3. The protein is RNA polymerase II-associated protein 1 (RPAP1) of Homo sapiens (Human).